Here is a 291-residue protein sequence, read N- to C-terminus: Glycine--tRNA ligase alpha subunit (291 aa).

The protein belongs to the class-II aminoacyl-tRNA synthetase family. As to quaternary structure, tetramer of two alpha and two beta subunits.

The protein localises to the cytoplasm. The catalysed reaction is tRNA(Gly) + glycine + ATP = glycyl-tRNA(Gly) + AMP + diphosphate. The polypeptide is Glycine--tRNA ligase alpha subunit (Rhizorhabdus wittichii (strain DSM 6014 / CCUG 31198 / JCM 15750 / NBRC 105917 / EY 4224 / RW1) (Sphingomonas wittichii)).